We begin with the raw amino-acid sequence, 468 residues long: Mothers against decapentaplegic homolog 1 (468 aa).

The residue at position 1 (Met-1) is an N-acetylmethionine. The region spanning 12–136 (PAVKRLLGWK…YKRVESPVLP (125 aa)) is the MH1 domain. The Zn(2+) site is built by Cys-64, Cys-109, Cys-121, and His-126. The interval 162–246 (NEPHMPLNAT…DGSQPMDTNM (85 aa)) is disordered. The segment covering 188-210 (PNSSYPNSPGSSSSTYPHSPTSS) has biased composition (low complexity). Residues 221 to 232 (DTPPPAYLPPED) are compositionally biased toward pro residues. The segment covering 237 to 246 (DGSQPMDTNM) has biased composition (polar residues). One can recognise an MH2 domain in the interval 274–468 (WCSIVYYELN…SPHNPISSVS (195 aa)). Position 325 is a phosphothreonine; by MINK1, TNIK and MAP4K4 (Thr-325). The L3 loop stretch occupies residues 421–431 (KGWGAEYHRQD). Ser-466 and Ser-468 each carry phosphoserine.

The protein belongs to the dwarfin/SMAD family. As to quaternary structure, found in a complex with SMAD4 and YY1. Interacts with HGS, NANOG and ZCCHC12. Upon C-terminus phosphorylation: forms trimers with another SMAD1 and the co-SMAD SMAD4. Interacts with PEBP2-alpha subunit, CREB-binding protein (CBP), p300, SMURF1, SMURF2, USP15 and HOXC8. Associates with ZNF423 or ZNF521 in response to BMP2 leading to activate transcription of BMP target genes. Interacts with SKOR1. Interacts (via MH2 domain) with LEMD3. Binding to LEMD3 results in at least a partial reduction of receptor-mediated phosphorylation. Forms a ternary complex with PSMB4 and OAZ1 before PSMB4 is incorporated into the 20S proteasome. Interacts (via MH2 domain) with FAM83G (via MH2 domain); in a SMAD4-independent manner. Interacts with ZC3H3. Interacts with TMEM119. Interacts (via MH1 and MH2 domains) with ZNF8. Interacts with RANBP3L; the interaction increases when SMAD1 is not phosphorylated and mediates SMAD1 nuclear export. Interacts with EGR1; this interaction inhibits SMAD1 dephosphorylation. Interacts with SMAD6. Interacts with YAP1. Interacts with MTMR4; negatively regulates BMP signaling through SMAD1 dephosphorylation and retention in endosomes. Post-translationally, phosphorylation of the C-terminal SVS motif by BMP type 1 receptor kinase activates SMAD1 by promoting dissociation from the receptor and trimerization with SMAD4. Phosphorylation by ERK2 MAP kinase in response to EGF or HGF prevents SMAD1 nuclear accumulation and transcriptional activity in response to BMP. Dephosphorylation, probably by PPM1A, induces its export from the nucleus to the cytoplasm. Dephosphorylation is inhibited by association with EGR1. Phosphorylation by CDK8/9 creates binding sites for YAP1, and subsequent phosphorylation by GSK3 switches off YAP1 binding and adds binding sites for SMURF1. In terms of processing, ubiquitinated by SMAD-specific E3 ubiquitin ligase SMURF1, leading to its degradation. Monoubiquitinated, leading to prevent DNA-binding. Deubiquitination by USP15 alleviates inhibition and promotes activation of TGF-beta target genes. Dephosphorylation, probably by PPM1A, induces its export from the nucleus to the cytoplasm. Phospho-SMAD1 is ubiquitinated by CHIP leading to disruption of the SMAD1-SMAD4 complex. In terms of tissue distribution, ubiquitous; present in liver, lung, stomach and spleen with lower level in heart, testes and skeletal muscle.

The protein resides in the cytoplasm. It localises to the nucleus. In terms of biological role, transcriptional modulator that plays a role in various cellular processes, including embryonic development, cell differentiation, and tissue homeostasis. Upon BMP ligand binding to their receptors at the cell surface, is phosphorylated by activated type I BMP receptors (BMPRIs) and associates with SMAD4 to form an heteromeric complex which translocates into the nucleus acting as transcription factor. In turn, the hetero-trimeric complex recognizes cis-regulatory elements containing Smad Binding Elements (SBEs) to modulate the outcome of the signaling network. SMAD1/OAZ1/PSMB4 complex mediates the degradation of the CREBBP/EP300 repressor SNIP1. Positively regulates BMP4-induced expression of odontogenic development regulator MSX1 following IPO7-mediated nuclear import. This chain is Mothers against decapentaplegic homolog 1 (Smad1), found in Rattus norvegicus (Rat).